Here is a 229-residue protein sequence, read N- to C-terminus: Large ribosomal subunit protein uL1 (229 aa).

This sequence belongs to the universal ribosomal protein uL1 family. Part of the 50S ribosomal subunit.

In terms of biological role, binds directly to 23S rRNA. The L1 stalk is quite mobile in the ribosome, and is involved in E site tRNA release. Protein L1 is also a translational repressor protein, it controls the translation of the L11 operon by binding to its mRNA. The polypeptide is Large ribosomal subunit protein uL1 (Haemophilus influenzae (strain 86-028NP)).